Reading from the N-terminus, the 223-residue chain is 2-C-methyl-D-erythritol 4-phosphate cytidylyltransferase (223 aa).

The protein belongs to the IspD/TarI cytidylyltransferase family. IspD subfamily.

The catalysed reaction is 2-C-methyl-D-erythritol 4-phosphate + CTP + H(+) = 4-CDP-2-C-methyl-D-erythritol + diphosphate. It participates in isoprenoid biosynthesis; isopentenyl diphosphate biosynthesis via DXP pathway; isopentenyl diphosphate from 1-deoxy-D-xylulose 5-phosphate: step 2/6. Catalyzes the formation of 4-diphosphocytidyl-2-C-methyl-D-erythritol from CTP and 2-C-methyl-D-erythritol 4-phosphate (MEP). The polypeptide is 2-C-methyl-D-erythritol 4-phosphate cytidylyltransferase (Prochlorococcus marinus (strain MIT 9215)).